A 307-amino-acid chain; its full sequence is UDP-3-O-acyl-N-acetylglucosamine deacetylase (307 aa).

Residues H80, H239, and D243 each contribute to the Zn(2+) site. Catalysis depends on H266, which acts as the Proton donor.

The protein belongs to the LpxC family. The cofactor is Zn(2+).

The catalysed reaction is a UDP-3-O-[(3R)-3-hydroxyacyl]-N-acetyl-alpha-D-glucosamine + H2O = a UDP-3-O-[(3R)-3-hydroxyacyl]-alpha-D-glucosamine + acetate. It functions in the pathway glycolipid biosynthesis; lipid IV(A) biosynthesis; lipid IV(A) from (3R)-3-hydroxytetradecanoyl-[acyl-carrier-protein] and UDP-N-acetyl-alpha-D-glucosamine: step 2/6. Catalyzes the hydrolysis of UDP-3-O-myristoyl-N-acetylglucosamine to form UDP-3-O-myristoylglucosamine and acetate, the committed step in lipid A biosynthesis. In Neisseria gonorrhoeae (strain ATCC 700825 / FA 1090), this protein is UDP-3-O-acyl-N-acetylglucosamine deacetylase.